The following is a 314-amino-acid chain: Methionyl-tRNA formyltransferase (314 aa).

Ser110–Pro113 is a binding site for (6S)-5,6,7,8-tetrahydrofolate.

This sequence belongs to the Fmt family.

The enzyme catalyses L-methionyl-tRNA(fMet) + (6R)-10-formyltetrahydrofolate = N-formyl-L-methionyl-tRNA(fMet) + (6S)-5,6,7,8-tetrahydrofolate + H(+). In terms of biological role, attaches a formyl group to the free amino group of methionyl-tRNA(fMet). The formyl group appears to play a dual role in the initiator identity of N-formylmethionyl-tRNA by promoting its recognition by IF2 and preventing the misappropriation of this tRNA by the elongation apparatus. This chain is Methionyl-tRNA formyltransferase, found in Bacillus anthracis (strain A0248).